We begin with the raw amino-acid sequence, 716 residues long: tRNA(Met) cytidine acetyltransferase TmcA (716 aa).

Residues glutamine 192, 217–226, and arginine 364 each bind ATP; that span reads GRGKSYVIGL. In terms of domain architecture, N-acetyltransferase spans 401 to 567; the sequence is REVLARDREV…KNVALAKPLD (167 aa). Residues 493–495 and 500–506 contribute to the acetyl-CoA site; these read IAV and QRRGLGS.

It belongs to the RNA cytidine acetyltransferase family. TmcA subfamily.

Its subcellular location is the cytoplasm. It carries out the reaction cytidine(34) in elongator tRNA(Met) + acetyl-CoA + ATP + H2O = N(4)-acetylcytidine(34) in elongator tRNA(Met) + ADP + phosphate + CoA + H(+). Its function is as follows. Catalyzes the formation of N(4)-acetylcytidine (ac(4)C) at the wobble position of tRNA(Met), by using acetyl-CoA as an acetyl donor and ATP (or GTP). This chain is tRNA(Met) cytidine acetyltransferase TmcA, found in Aeropyrum pernix (strain ATCC 700893 / DSM 11879 / JCM 9820 / NBRC 100138 / K1).